We begin with the raw amino-acid sequence, 657 residues long: Splicing factor Cactin (657 aa).

Basic residues predominate over residues 1–15; sequence MGKDSKKHKKERRRE. 3 disordered regions span residues 1-83, 369-406, and 472-503; these read MGKD…EDTL, QESEELLPVAEVPPQVKIQKEEEEEEEEDEDDEKISKK, and ADVDNLTERRNRNRGTLPSSSAASSGAPQGAS. Coiled coils occupy residues 23–77 and 352–403; these read SDEE…RKDA and RLQL…DEKI. Over residues 26–60 the composition is skewed to basic and acidic residues; sequence ERLQKRLAEQRSLKKDEKRRQKEEMKKNESAEEKR. A compositionally biased stretch (basic residues) spans 61-72; the sequence is ARRMEKKMRKDA. Positions 389–401 are enriched in acidic residues; the sequence is EEEEEEEEDEDDE. Residues 489–503 show a composition bias toward low complexity; sequence PSSSAASSGAPQGAS.

The protein belongs to the CACTIN family. In terms of tissue distribution, expressed in pharynx, intestine, vulva and spermatheca (at protein level).

The protein localises to the nucleus. Its subcellular location is the cytoplasm. Functionally, plays a role in pre-mRNA splicing by facilitating excision of a subset of introns. Plays a role during early embryonic development. Required for the distal tip cell migration at the end of larval development and for gonad morphogenesis. The chain is Splicing factor Cactin (cacn-1) from Caenorhabditis elegans.